We begin with the raw amino-acid sequence, 217 residues long: Proteasome subunit beta type-6-A like protein (217 aa).

Residues methionine 1–glycine 16 constitute a propeptide, removed in mature form. Threonine 17 serves as the catalytic Nucleophile.

Belongs to the peptidase T1B family. In terms of assembly, the 26S proteasome consists of a 20S proteasome core and two 19S regulatory subunits. The 20S proteasome core is composed of 28 subunits that are arranged in four stacked rings, resulting in a barrel-shaped structure. The two end rings are each formed by seven alpha subunits, and the two central rings are each formed by seven beta subunits. The catalytic chamber with the active sites is on the inside of the barrel.

The protein localises to the cytoplasm. The protein resides in the nucleus. It carries out the reaction Cleavage of peptide bonds with very broad specificity.. Its function is as follows. The proteasome is a multicatalytic proteinase complex which is characterized by its ability to cleave peptides with Arg, Phe, Tyr, Leu, and Glu adjacent to the leaving group at neutral or slightly basic pH. The proteasome has an ATP-dependent proteolytic activity. This subunit is involved in antigen processing to generate class I binding peptides. The polypeptide is Proteasome subunit beta type-6-A like protein (psmb6l-a) (Salmo salar (Atlantic salmon)).